We begin with the raw amino-acid sequence, 190 residues long: dTTP/UTP pyrophosphatase (190 aa).

Residue Asp-70 is the Proton acceptor of the active site.

It belongs to the Maf family. YhdE subfamily. A divalent metal cation is required as a cofactor.

The protein resides in the cytoplasm. It carries out the reaction dTTP + H2O = dTMP + diphosphate + H(+). The catalysed reaction is UTP + H2O = UMP + diphosphate + H(+). Nucleoside triphosphate pyrophosphatase that hydrolyzes dTTP and UTP. May have a dual role in cell division arrest and in preventing the incorporation of modified nucleotides into cellular nucleic acids. The sequence is that of dTTP/UTP pyrophosphatase from Gloeobacter violaceus (strain ATCC 29082 / PCC 7421).